The sequence spans 253 residues: Imidazole glycerol phosphate synthase subunit HisF (253 aa).

Catalysis depends on residues Asp-11 and Asp-130.

This sequence belongs to the HisA/HisF family. Heterodimer of HisH and HisF.

The protein resides in the cytoplasm. It carries out the reaction 5-[(5-phospho-1-deoxy-D-ribulos-1-ylimino)methylamino]-1-(5-phospho-beta-D-ribosyl)imidazole-4-carboxamide + L-glutamine = D-erythro-1-(imidazol-4-yl)glycerol 3-phosphate + 5-amino-1-(5-phospho-beta-D-ribosyl)imidazole-4-carboxamide + L-glutamate + H(+). Its pathway is amino-acid biosynthesis; L-histidine biosynthesis; L-histidine from 5-phospho-alpha-D-ribose 1-diphosphate: step 5/9. Its function is as follows. IGPS catalyzes the conversion of PRFAR and glutamine to IGP, AICAR and glutamate. The HisF subunit catalyzes the cyclization activity that produces IGP and AICAR from PRFAR using the ammonia provided by the HisH subunit. The protein is Imidazole glycerol phosphate synthase subunit HisF of Ruminiclostridium cellulolyticum (strain ATCC 35319 / DSM 5812 / JCM 6584 / H10) (Clostridium cellulolyticum).